We begin with the raw amino-acid sequence, 339 residues long: Putative phosphate acyltransferase (339 aa).

This sequence belongs to the PlsX family. As to quaternary structure, homodimer. Probably interacts with PlsY.

The protein localises to the cytoplasm. It catalyses the reaction a fatty acyl-[ACP] + phosphate = an acyl phosphate + holo-[ACP]. Its pathway is lipid metabolism; phospholipid metabolism. Functionally, catalyzes the reversible formation of acyl-phosphate (acyl-PO(4)) from acyl-[acyl-carrier-protein] (acyl-ACP). This enzyme utilizes acyl-ACP as fatty acyl donor, but not acyl-CoA. The sequence is that of Putative phosphate acyltransferase from Clostridium perfringens (strain 13 / Type A).